The sequence spans 470 residues: Aspartate-semialdehyde dehydrogenase 1 (470 aa).

2 residues coordinate NAD(+): Thr-145 and Lys-171. Asp-243 is a catalytic residue. Gly-245 is an NAD(+) binding site. Cys-277 is a catalytic residue. Glu-371 contacts NAD(+).

It belongs to the aldehyde dehydrogenase family.

It carries out the reaction L-aspartate 4-semialdehyde + NAD(+) + H2O = L-aspartate + NADH + 2 H(+). In terms of biological role, dehydrogenase involved in the degradation of canavanine, the delta-oxa-analog of arginine, allowing growth on canavanine as sole nitrogen and carbon source. Probably catalyzes the NAD(+)-dependent oxidation of L-aspartate-semialdehyde to L-aspartate. The sequence is that of Aspartate-semialdehyde dehydrogenase 1 from Pseudomonas canavaninivorans.